A 163-amino-acid polypeptide reads, in one-letter code: 3-isopropylmalate dehydratase small subunit 2 (163 aa).

Belongs to the LeuD family. LeuD type 2 subfamily. In terms of assembly, heterodimer of LeuC and LeuD.

The enzyme catalyses (2R,3S)-3-isopropylmalate = (2S)-2-isopropylmalate. The protein operates within amino-acid biosynthesis; L-leucine biosynthesis; L-leucine from 3-methyl-2-oxobutanoate: step 2/4. Its function is as follows. Catalyzes the isomerization between 2-isopropylmalate and 3-isopropylmalate, via the formation of 2-isopropylmaleate. In Pyrococcus abyssi (strain GE5 / Orsay), this protein is 3-isopropylmalate dehydratase small subunit 2 (leuD2).